We begin with the raw amino-acid sequence, 890 residues long: MATQIDASSEAAAATAAAQHTPMMQQYLRIKSEHPDTLVFYRMGDFYELFFEDAEKAARLLDLTLTQRGASAGTPIKMAGVPHHAVEQYLAKLVKFGESAAICEQIGDPATSKGPVERKVVRVVTPGTLTDAALLSDKSDVFLLALCVGHNKRGVASNIGLAWLNLASGALRLAELAPDQLGAALERIRPAEILAADGTIESVPAGMGAITRVPAWHFDIASGTQRLCDQLEVASLDGFGAQALTSANGAAGALLIYAAATQGQQLRHVRSLKVENESEYIGLDPSTRRNLELTETLRGTESPTLYSLLDTCCTAMGSRLLRHWLHHPPRASVAAQARHQAIGALLDAPPNAGLDSLRSALRQIADVERITGRLALLSARPRDLSSLRDTFAALPALRERVAEIASNAAALGRLEAALEPPPGCLDLLTRAIAAEPAAMVRDGGVIARGYDAELDELRDISENCGQFLIDLETRERARTGISNLRVEYNKVHGFYIEVTRGQTDKVPDDYRRRQTLKNAERYITPELKTFEDKALSAQERALARERALYDGVLQALLPHIEGCQRVASGLAELDLLAAFAERARTLDWVAPEFTDEIGIEIDQGRHPVVEAQVEQFIANDCALNPERKLLLITGPNMGGKSTFMRQTALIALMAYVGSYVPAKAARFGPIDRIFTRIGAADDLAGGRSTFMVEMTEAAAILNDATPHSLVLMDEIGRGTSTFDGLALAWAIARHLLSHNRCYTLFATHYFELTQLPVEFPQAANVHLSAVEHGHGIVFLHAVEEGPANQSYGLQVAQLAGVPAPVIRAARKHLAHLEQQSAAQATPQLDLFAAPPVVDEPECNEPPAATPHPALERLLELDPDDLKPRDALDLLYELHTLARSGPADAQR.

634 to 641 (GPNMGGKS) lines the ATP pocket.

This sequence belongs to the DNA mismatch repair MutS family.

This protein is involved in the repair of mismatches in DNA. It is possible that it carries out the mismatch recognition step. This protein has a weak ATPase activity. This chain is DNA mismatch repair protein MutS, found in Burkholderia pseudomallei (strain 1710b).